A 440-amino-acid polypeptide reads, in one-letter code: Transposon Ty1-BR Gag polyprotein (440 aa).

Composition is skewed to polar residues over residues 1–10, 48–60, and 127–152; these read MESQQLSNYP, TKAN…TPAS, and QSQF…GNTF. Disordered regions lie at residues 1 to 93, 126 to 173, and 352 to 440; these read MESQ…MMTQ, PQSQ…RPPP, and GSRN…PETY. The span at 153–165 shows a compositional bias: low complexity; it reads TDSSSADSDMTST. Residues 299-401 form an RNA-binding region; it reads NNGIHINNKV…NSKSKTARAH (103 aa). A compositionally biased stretch (low complexity) spans 402-418; it reads NVSTSNNSPSTDNDSIS. Ser-416 is modified (phosphoserine). The span at 419 to 428 shows a compositional bias: polar residues; that stretch reads KSTTEPIQLN. Over residues 429 to 440 the composition is skewed to basic and acidic residues; it reads NKHDLHLRPETY.

In terms of assembly, homotrimer.

It localises to the cytoplasm. In terms of biological role, capsid protein (CA) is the structural component of the virus-like particle (VLP), forming the shell that encapsulates the retrotransposons dimeric RNA genome. The particles are assembled from trimer-clustered units and there are holes in the capsid shells that allow for the diffusion of macromolecules. CA also has nucleocapsid-like chaperone activity, promoting primer tRNA(i)-Met annealing to the multipartite primer-binding site (PBS), dimerization of Ty1 RNA and initiation of reverse transcription. The polypeptide is Transposon Ty1-BR Gag polyprotein (TY1A-BR) (Saccharomyces cerevisiae (strain ATCC 204508 / S288c) (Baker's yeast)).